Reading from the N-terminus, the 526-residue chain is Clostripain (526 aa).

Residues 1 to 27 form the signal peptide; the sequence is MLRRKVSTLLMTALITTSFLNSKPVYA. The propeptide occupies 28 to 50; sequence NPVTKSKDNNLKEVQQVTSKSNK. A propeptide spans 182 to 190 (linker); that stretch reads EKSNPRLNR. The active-site Nucleophile is Cys231.

The protein belongs to the peptidase C11 family. Heterodimer of a light chain and a heavy chain held together by strong non-covalent forces rather than by intramolecular disulfide bridges.

It catalyses the reaction Preferential cleavage: Arg-|-Xaa, including Arg-|-Pro bond, but not Lys-|-Xaa.. In terms of biological role, cysteine endopeptidase with strict specificity. The chain is Clostripain (cloSI) from Hathewaya histolytica (Clostridium histolyticum).